We begin with the raw amino-acid sequence, 963 residues long: Importin-13 (963 aa).

20 HEAT repeats span residues 24 to 54 (ENVE…QAQV), 56 to 88 (PQAW…KISR), 95 to 135 (TDQY…LSMM), 142 to 179 (AVAD…EFQT), 194 to 231 (LAVE…SWVQ), 236 to 268 (LQDC…NAIS), 276 to 325 (VNTL…ALLD), 330 to 372 (WQSF…DDIL), 375 to 438 (EAEK…YEML), 440 to 476 (AELL…FQSI), 487 to 522 (VVPG…WLAD), 524 to 558 (PVMI…CREC), 562 to 600 (LPPY…LLSA), 603 to 648 (VEEI…SNLF), 676 to 716 (PVVV…VKTL), 720 to 754 (FAPM…VHIF), 761 to 803 (FPPI…ALKR), 815 to 845 (VKAV…TELL), 860 to 893 (EDGR…FALN), and 897 to 931 (FSLL…QQIL). One can recognise an Importin N-terminal domain in the interval 45–111 (AQKWLMQAQV…KAQLFTQITR (67 aa)).

The protein belongs to the importin beta family. In terms of assembly, interacts with UBC9, RAN, RBM8A, eIF-1A and PAX6. Expressed in fetal brain, heart, intestine and kidney.

Its subcellular location is the cytoplasm. The protein resides in the nucleus. Functionally, functions in nuclear protein import as nuclear transport receptor. Serves as receptor for nuclear localization signals (NLS) in cargo substrates. Is thought to mediate docking of the importin/substrate complex to the nuclear pore complex (NPC) through binding to nucleoporin and the complex is subsequently translocated through the pore by an energy requiring, Ran-dependent mechanism. At the nucleoplasmic side of the NPC, Ran binds to the importin, the importin/substrate complex dissociates and importin is re-exported from the nucleus to the cytoplasm where GTP hydrolysis releases Ran. The directionality of nuclear import is thought to be conferred by an asymmetric distribution of the GTP- and GDP-bound forms of Ran between the cytoplasm and nucleus. Mediates the nuclear import of UBC9, the RBM8A/MAGOH complex, PAX6 and probably other members of the paired homeobox family. Also mediates nuclear export of eIF-1A, and the cytoplasmic release of eIF-1A is triggered by the loading of import substrates onto IPO13. This is Importin-13 (IPO13) from Homo sapiens (Human).